The sequence spans 587 residues: MEGESVKPSPQPTAQAEDEEKNRRTVTVNAAHMGKAFKVMNELRSKRLLCDVMIVAEDVEVEAHRVVLAACSPYFCAMFTGDMSESKAKKIEIKDVDGQTLSKLIDYIYTAEIEVTEENVQVLLPAASLLQLMDVRQNCCDFLQSQLHPTNCLGIRAFADVHTCTDLLQQANAYAEQHFPEVMLGEEFLSLSLDQVCSLISSDKLTVSSEEKVFEAVISWINYEKETRLDHMAKLMEHVRLPLLPRDYLVQTVEEEALIKNNNTCKDFLIEAMKYHLLPLDQRLLIKNPRTKPRTPVSLPKVMIVVGGQAPKAIRSVECYDFEEGRWDQIAELPSRRCRAGVVFMAGHVYAVGGFNGSLRVRTVDVYDGVKDQWTSIASMQERRSTLGAAVLNDLLYAVGGFDGSTGLASVEAYSYKTNEWFFVAPMNTRRSSVGVGVVEGKLYAVGGYDGASRQCLSTVEQYNPATNEWIYVADMSTRRSGAGVGVLSGQLYATGGHDGPLVRKSVEVYDPGTNTWKQVADMNMCRRNAGVCAVNGLLYVVGGDDGSCNLASVEYYNPVTDKWTLLPTNMSTGRSYAGVAVIHKSL.

Residues 1–24 (MEGESVKPSPQPTAQAEDEEKNRR) form a disordered region. Residues 50 to 117 (CDVMIVAEDV…IYTAEIEVTE (68 aa)) form the BTB domain. The region spanning 152–254 (CLGIRAFADV…PRDYLVQTVE (103 aa)) is the BACK domain. Thr295 bears the Phosphothreonine mark. Kelch repeat units follow at residues 302-347 (VMIV…FMAG), 348-394 (HVYA…VLND), 396-441 (LYAV…VVEG), 442-490 (KLYA…VLSG), 491-537 (QLYA…AVNG), and 539-585 (LYVV…VIHK). A Phosphothreonine modification is found at Thr375. Phosphoserine is present on residues Ser376 and Ser433.

This sequence belongs to the KLHL3 family. Homodimer. Component of the BCR(KLHL3) E3 ubiquitin ligase complex, at least composed of CUL3 and KLHL3 and RBX1. Interacts with CLDN8. Post-translationally, phosphorylation at Ser-433 by PKA or PKC decreases the interaction with WNK1 and WNK4, leading to inhibit their degradation by the BCR(KLHL3) complex. Phosphorylated at Ser-433 by PKC in response to angiotensin II signaling, decreasing ability to promote degradation of WNK1 and WNK4, leading to activation of Na-Cl cotransporter SLC12A3/NCC. Phosphorylation at Ser-433 is increased by insulin. Dephosphorylated at Ser-433 by calcineurin PPP3CA, promoting degradation of WNK1 and WNK4. Present at high level in brain and kidney (at protein level). Weakly expressed in other tissues. In kidney, predominantly localizes to the distal convoluted tubule (DCT) and collecting duct, with apical localization in the DCT (at protein level).

Its subcellular location is the cytoplasm. It localises to the cytosol. It is found in the cytoskeleton. The protein operates within protein modification; protein ubiquitination. In terms of biological role, substrate-specific adapter of a BCR (BTB-CUL3-RBX1) E3 ubiquitin ligase complex that acts as a regulator of ion transport in the distal nephron. The BCR(KLHL3) complex acts by mediating ubiquitination and degradation of WNK1 and WNK4, two activators of Na-Cl cotransporter SLC12A3/NCC in distal convoluted tubule cells of kidney, thereby regulating NaCl reabsorption. The BCR(KLHL3) complex also mediates ubiquitination of CLDN8, a tight-junction protein required for paracellular chloride transport in the kidney, leading to its degradation. This Mus musculus (Mouse) protein is Kelch-like protein 3.